Reading from the N-terminus, the 98-residue chain is Citrate lyase acyl carrier protein (98 aa).

The residue at position 14 (S14) is an O-(phosphoribosyl dephospho-coenzyme A)serine.

The protein belongs to the CitD family. As to quaternary structure, oligomer with a subunit composition of (alpha,beta,gamma)6.

It localises to the cytoplasm. In terms of biological role, covalent carrier of the coenzyme of citrate lyase. This chain is Citrate lyase acyl carrier protein, found in Albidiferax ferrireducens (strain ATCC BAA-621 / DSM 15236 / T118) (Rhodoferax ferrireducens).